A 328-amino-acid polypeptide reads, in one-letter code: Olfactory receptor 2AJ1 (328 aa).

Residues 1 to 25 (MGHQNHTFSSDFILLGLFSSSPTSV) are Extracellular-facing. Asparagine 5 carries N-linked (GlcNAc...) asparagine glycosylation. A helical membrane pass occupies residues 26–49 (VFFLVLFVIFIMSVTENTLMILLI). The Cytoplasmic segment spans residues 50-57 (RSDSRLHT). The helical transmembrane segment at 58–79 (PMYFLLSHLSLMDILHVSNIVP) threads the bilayer. Topologically, residues 80 to 100 (KMVTNFLSGSRTISFAGCGFQ) are extracellular. Cysteine 97 and cysteine 189 form a disulfide bridge. A helical transmembrane segment spans residues 101 to 120 (VFLSLTLLGGECLLLAAMSC). Over 121 to 139 (DRYVAICHPLRYPILMKEY) the chain is Cytoplasmic. Residues 140–158 (ASALMAGGSWLIGVFNSTV) traverse the membrane as a helical segment. The Extracellular segment spans residues 159 to 195 (HTAYALQFPFCGSRAIDHFFCEVPAMLKLSCADTTRY). A helical membrane pass occupies residues 196 to 219 (ERGVCVSAVIFLLIPFSLISASYG). Residues 220 to 236 (QIILTVLQMKSSEARKK) lie on the Cytoplasmic side of the membrane. The chain crosses the membrane as a helical span at residues 237 to 259 (SFSTCSFHMIVVTMYYGPFIFTY). Residues 260-272 (MRPKSYHTPGQDK) are Extracellular-facing. A helical transmembrane segment spans residues 273-292 (FLAIFYTILTPTLNPFIYSF). Topologically, residues 293 to 328 (RNKDVLAVMKNMLKSNFLHKKMNRKIPECVFCLFLC) are cytoplasmic.

This sequence belongs to the G-protein coupled receptor 1 family.

The protein localises to the cell membrane. Its function is as follows. Odorant receptor. This chain is Olfactory receptor 2AJ1 (OR2AJ1), found in Homo sapiens (Human).